We begin with the raw amino-acid sequence, 527 residues long: DNA polymerase epsilon subunit 2 (527 aa).

Belongs to the DNA polymerase epsilon subunit B family. In terms of assembly, component of the DNA polymerase epsilon complex consisting of four subunits: the catalytic subunit POLE and the accessory subunits POLE2, POLE3 and POLE4.

It is found in the nucleus. Functionally, accessory component of the DNA polymerase epsilon complex. Participates in DNA repair and in chromosomal DNA replication. This is DNA polymerase epsilon subunit 2 (Pole2) from Mus musculus (Mouse).